The sequence spans 228 residues: Trichome differentiation protein GL1 (228 aa).

HTH myb-type domains are found at residues 11 to 63 (NQEY…MNYL) and 64 to 118 (SPNV…SKKL). 2 consecutive DNA-binding regions (H-T-H motif) follow at residues 39–63 (WNRI…MNYL) and 91–114 (WSLI…NTHL).

In terms of assembly, homodimer and heterodimer with MYB82. Interacts directly with GL3 and BHLH2. Part of a complex made of GL1, GL3 or BHLH2, and TTG1. Also interacts with BHLH2/EGL3/MYC146 and BHLH12/MYC1. Interacts with MYB82. In terms of tissue distribution, expressed in leaves, stems and flowers. Expressed in trichome cells and in leaf primordia.

The protein localises to the nucleus. In terms of biological role, transcription activator, when associated with BHLH2/EGL3/MYC146 or BHLH12/MYC1. Involved in epidermal cell fate specification in leaves. Together with TTG1 and GL3, promotes trichome formation and endoreplication. Regulates the production of a signal that induces hair (trichome) precursor cells on leaf primordia to differentiate. Binds to the WER-binding sites (WBS) promoter regions and activates the transcription of target genes. The polypeptide is Trichome differentiation protein GL1 (Arabidopsis thaliana (Mouse-ear cress)).